The sequence spans 249 residues: Zinc finger protein CG30 (249 aa).

The RING-type zinc finger occupies 8-66; the sequence is CHICCSVGEIKNYFLQPVDAITILPIVELHTCRHQLCVMCVRKIAQRGRDKRVECPMCR.

The polypeptide is Zinc finger protein CG30 (CG30) (Orgyia pseudotsugata (Douglas-fir tussock moth)).